A 530-amino-acid polypeptide reads, in one-letter code: Metal transporter Nramp5 (530 aa).

Residues 1 to 10 (MTGSTVSRQE) are compositionally biased toward polar residues. A disordered region spans residues 1–53 (MTGSTVSRQENSPKRPNDSNGEFKRLLVPETSQPEEDELHESPPENQILNVEE). Residues 11-27 (NSPKRPNDSNGEFKRLL) are compositionally biased toward basic and acidic residues. Helical transmembrane passes span 65–85 (FSWAKLWKFTGPGFLMSIAFL), 98–118 (AVAGYSLLWLLLWATLMGLLM), 147–167 (ILLWFMAEVALIGADIQEVIG), 179–199 (FLPIWVGVIITSFDCFLISYL), 207–227 (LEGLFAVLIATMALSFAWMFN), 253–273 (AVGVVGCVITPHNVFLHSALV), 299–319 (AALFVSFMINLFVTAVFAKGF), 341–361 (YGGGVFPILYIWGIGLLAAGQ), 387–407 (LSAFITRSFAIVPTMFVAIMF), 429–449 (IPFAVIPLLTMVSNEHIMGVF), 458–478 (LAWTVAVFVMMINGYLLLDFF), and 485–505 (FLVGFLVFGGVVGYISFIIYL).

This sequence belongs to the NRAMP (TC 2.A.55) family.

The protein resides in the membrane. In terms of biological role, seems to be involved in iron uptake. The sequence is that of Metal transporter Nramp5 (NRAMP5) from Arabidopsis thaliana (Mouse-ear cress).